A 117-amino-acid polypeptide reads, in one-letter code: MTRVRRGYIARRRRTKIRLFTSTFRGAHSRLTRTTTQQKMRALVSSHRDRCRQKRDFRRLWITRINAVTRENRVSYSYSRLMHDLYKRQLLLNRKILAQIAISNRNCIYMISNEIIK.

Belongs to the bacterial ribosomal protein bL20 family.

It is found in the plastid. Its subcellular location is the chloroplast. Its function is as follows. Binds directly to 23S ribosomal RNA and is necessary for the in vitro assembly process of the 50S ribosomal subunit. It is not involved in the protein synthesizing functions of that subunit. This chain is Large ribosomal subunit protein bL20c, found in Drimys granadensis.